We begin with the raw amino-acid sequence, 541 residues long: Glucose-6-phosphate isomerase (541 aa).

Glu346 acts as the Proton donor in catalysis. Active-site residues include His377 and Lys506.

The protein belongs to the GPI family.

The protein resides in the cytoplasm. It catalyses the reaction alpha-D-glucose 6-phosphate = beta-D-fructose 6-phosphate. Its pathway is carbohydrate biosynthesis; gluconeogenesis. It functions in the pathway carbohydrate degradation; glycolysis; D-glyceraldehyde 3-phosphate and glycerone phosphate from D-glucose: step 2/4. Its function is as follows. Catalyzes the reversible isomerization of glucose-6-phosphate to fructose-6-phosphate. This is Glucose-6-phosphate isomerase from Sinorhizobium medicae (strain WSM419) (Ensifer medicae).